The primary structure comprises 565 residues: Galactoside 2-alpha-L-fucosyltransferase (565 aa).

Residues 1–43 lie on the Cytoplasmic side of the membrane; it reads MNMLIKRVIAIKNPRGDDNNNNKLSDLETLTDKCTTCPLTLMR. Residues 44-64 traverse the membrane as a helical; Signal-anchor for type II membrane protein segment; sequence VMAFFVVSFMLFSVLFSLSVV. Residues 65–565 are Lumenal-facing; that stretch reads LRDPPSDAAI…MSWGLKLVDN (501 aa). 4 N-linked (GlcNAc...) asparagine glycosylation sites follow: asparagine 159, asparagine 263, asparagine 407, and asparagine 509.

This sequence belongs to the glycosyltransferase 37 family.

The protein resides in the golgi apparatus. It localises to the golgi stack membrane. It participates in protein modification; protein glycosylation. Involved in cell wall biosynthesis. Adds the terminal fucosyl residue on xyloglucan side chains. This Pisum sativum (Garden pea) protein is Galactoside 2-alpha-L-fucosyltransferase (FT1).